Reading from the N-terminus, the 342-residue chain is MKTGFFLFAACAALVAVQAQEATNSTVKYIDYSSLKKFTRAPRTKAPPTKETTIQQSSLSGSQEQQQEQIETPAPTRVPAPTRPNPRATKAPTPAPTPAPTPAPTPAPTPAPTPAPTPDPGPWEAKWIDHDQVKPFAQPEPVTISEKAAVKYKPQIHIVNGCHPYPAVNEAGETSGGLKTKGAPSAGCKGSGWGSQVYGRSTWVRGVWAIMYSWYFPKDSPSSGLGHRHDWEHVIVWIDNPDIENPKILAVTPSAHSGYSKQVPPKADCVDGTSVKVKYESKWPVNHALDSTSEGGDFQDLIMWDQLSENARRAMNGVGWGKANTPFNDGNFLPKLDKAWPF.

A signal peptide spans 1-19 (MKTGFFLFAACAALVAVQA). N-linked (GlcNAc...) asparagine glycosylation occurs at N24. The interval 41–125 (APRTKAPPTK…PTPDPGPWEA (85 aa)) is disordered. The segment covering 55–75 (QQSSLSGSQEQQQEQIETPAP) has biased composition (low complexity). The segment covering 93–121 (TPAPTPAPTPAPTPAPTPAPTPAPTPDPG) has biased composition (pro residues). The short motif at 226–232 (GHRHDWE) is the Hepta-peptide GHRHDWE motif element.

It belongs to the Necrosis inducing protein (NPP1) family.

The protein localises to the secreted. Secreted effector that contributes strongly to virulence during infection by P.capsici. Induces cell death in the Solanaceae, including Nicotiana benthamiana. In Phytophthora capsici, this protein is NLP effector protein Pc107869.